Reading from the N-terminus, the 346-residue chain is Thioredoxin domain-containing protein R362 (346 aa).

The region spanning 212-345 is the Thioredoxin domain; sequence LTNLSNTEAN…IVKFIDETMS (134 aa).

The protein resides in the virion. The protein is Thioredoxin domain-containing protein R362 of Acanthamoeba polyphaga (Amoeba).